The sequence spans 587 residues: Inorganic phosphate transporter PHO84 (587 aa).

Residues 1–67 (MSSVNKDTIH…FGWQQVKTIS (67 aa)) lie on the Extracellular side of the membrane. K6 is covalently cross-linked (Glycyl lysine isopeptide (Lys-Gly) (interchain with G-Cter in ubiquitin)). The helical transmembrane segment at 68-88 (IAGVGFLTDSYDIFAINLGIT) threads the bilayer. Over 89–108 (MMSYVYWHGSMPGPSQTLLK) the chain is Cytoplasmic. Residues 109-129 (VSTSVGTVIGQFGFGTLADIV) traverse the membrane as a helical segment. Residues 130–133 (GRKR) lie on the Extracellular side of the membrane. A helical transmembrane segment spans residues 134 to 154 (IYGMELIIMIVCTILQTTVAH). The Cytoplasmic segment spans residues 155 to 156 (SP). A helical membrane pass occupies residues 157-177 (AINFVAVLTFYRIVMGIGIGG). At 178 to 201 (DYPLSSIITSEFATTKWRGAIMGA) the chain is on the extracellular side. Residues 202-222 (VFANQAWGQISGGIIALILVA) form a helical membrane-spanning segment. The Cytoplasmic segment spans residues 223 to 250 (AYKGELEYANSGAECDARCQKACDQMWR). The chain crosses the membrane as a helical span at residues 251-271 (ILIGLGTVLGLACLYFRLTIP). At 272–345 (ESPRYQLDVN…RHFGQWKYGK (74 aa)) the chain is on the extracellular side. A Glycyl lysine isopeptide (Lys-Gly) (interchain with G-Cter in ubiquitin) cross-link involves residue K298. At T302 the chain carries Phosphothreonine. A phosphoserine mark is found at S303 and S316. Residue T317 is modified to Phosphothreonine. A Phosphoserine modification is found at S321. Residues 346-366 (ILLGTAGSWFTLDVAFYGLSL) form a helical membrane-spanning segment. At 367–395 (NSAVILQTIGYAGSKNVYKKLYDTAVGNL) the chain is on the cytoplasmic side. Residues 396–416 (ILICAGSLPGYWVSVFTVDII) traverse the membrane as a helical segment. The Extracellular segment spans residues 417–419 (GRK). A helical transmembrane segment spans residues 420 to 440 (PIQLAGFIILTALFCVIGFAY). Topologically, residues 441-442 (HK) are cytoplasmic. The helical transmembrane segment at 443–463 (LGDHGLLALYVICQFFQNFGP) threads the bilayer. At 464–485 (NTTTFIVPGECFPTRYRSTAHG) the chain is on the extracellular side. The chain crosses the membrane as a helical span at residues 486–506 (ISAASGKVGAIIAQTALGTLI). Residues 507 to 522 (DHNCARDGKPTNCWLP) are Cytoplasmic-facing. Residues 523-543 (HVMEIFALFMLLGIFTTLLIP) traverse the membrane as a helical segment. Over 544-587 (ETKRKTLEEINELYHDEIDPATLNFRNKNNDIESSSPSQLQHEA) the chain is Extracellular. The disordered stretch occupies residues 568 to 587 (FRNKNNDIESSSPSQLQHEA). A phosphoserine mark is found at S577, S579, and S581.

The protein belongs to the major facilitator superfamily. Phosphate:H(+) symporter (TC 2.A.1.9) family. As to quaternary structure, may function as a monomer. Post-translationally, phosphorylated; phosphorylation increases after phosphate addition to the growth medium. In terms of processing, ubiquitinated in a phosphate-dependent manner; ubiquitination may influence the trafficking of PHO84 to the cell membrane and serve as a signal for endocytosis and internalization.

The protein localises to the cell membrane. It localises to the vacuole. It catalyses the reaction phosphate(in) + H(+)(in) = phosphate(out) + H(+)(out). The catalysed reaction is Mn(2+)(in) = Mn(2+)(out). The enzyme catalyses Zn(2+)(in) = Zn(2+)(out). It carries out the reaction Cu(2+)(in) = Cu(2+)(out). It catalyses the reaction Co(2+)(in) = Co(2+)(out). Transport activity is inhibited in the presence of the protonophore carbonylcyanide m-chlorophenylhydrazone. Transport activity is inhibited by glycerol-3-phosphate. Transport activity is inhibited by phosphonoacetic acid. Signaling activity is stimulated by glycerol-3-phosphate which acts as a nontransported PHO84 agonist that can trigger PKA signaling. Signaling activity is stimulated by arsenate. In terms of biological role, proton-coupled high-affinity transporter for external inorganic phosphate. Acts as a transceptor, a membrane protein that in addition to its transporter activity also possesses receptor-like signaling activity; mediates activation of the protein kinase A (PKA) pathway targets during growth induction, triggered by phosphate addition to cells growth-arrested due to previous phosphate starvation. Is not an essential protein, since constitutive, low affinity phosphate transporters exist in yeast. Can function as a low affinity metal transporter that transports manganese, zinc, cobalt and copper. Plays a role in manganese homeostasis predominantly under manganese surplus conditions. The chain is Inorganic phosphate transporter PHO84 (PHO84) from Saccharomyces cerevisiae (strain ATCC 204508 / S288c) (Baker's yeast).